The chain runs to 760 residues: Phosphoribosylformylglycinamidine synthase subunit PurL (760 aa).

The disordered stretch occupies residues 1–25; the sequence is MNMSLPADRDTAKKPSAQKPSAHAQ. His69 is an active-site residue. ATP is bound by residues Tyr72 and Lys115. Glu117 is a Mg(2+) binding site. Residues 118–121 and Arg140 each bind substrate; that span reads SHNH. His119 serves as the catalytic Proton acceptor. Position 141 (Asp141) interacts with Mg(2+). Substrate is bound at residue Gln265. Residue Asp293 coordinates Mg(2+). 337-339 contributes to the substrate binding site; the sequence is ESQ. The ATP site is built by Asn519 and Gly556. Asn557 contributes to the Mg(2+) binding site. Ser559 serves as a coordination point for substrate.

It belongs to the FGAMS family. As to quaternary structure, monomer. Part of the FGAM synthase complex composed of 1 PurL, 1 PurQ and 2 PurS subunits.

The protein localises to the cytoplasm. It catalyses the reaction N(2)-formyl-N(1)-(5-phospho-beta-D-ribosyl)glycinamide + L-glutamine + ATP + H2O = 2-formamido-N(1)-(5-O-phospho-beta-D-ribosyl)acetamidine + L-glutamate + ADP + phosphate + H(+). It participates in purine metabolism; IMP biosynthesis via de novo pathway; 5-amino-1-(5-phospho-D-ribosyl)imidazole from N(2)-formyl-N(1)-(5-phospho-D-ribosyl)glycinamide: step 1/2. Its function is as follows. Part of the phosphoribosylformylglycinamidine synthase complex involved in the purines biosynthetic pathway. Catalyzes the ATP-dependent conversion of formylglycinamide ribonucleotide (FGAR) and glutamine to yield formylglycinamidine ribonucleotide (FGAM) and glutamate. The FGAM synthase complex is composed of three subunits. PurQ produces an ammonia molecule by converting glutamine to glutamate. PurL transfers the ammonia molecule to FGAR to form FGAM in an ATP-dependent manner. PurS interacts with PurQ and PurL and is thought to assist in the transfer of the ammonia molecule from PurQ to PurL. The protein is Phosphoribosylformylglycinamidine synthase subunit PurL of Tropheryma whipplei (strain TW08/27) (Whipple's bacillus).